A 92-amino-acid polypeptide reads, in one-letter code: Small ribosomal subunit protein uS19 (92 aa).

It belongs to the universal ribosomal protein uS19 family.

Protein S19 forms a complex with S13 that binds strongly to the 16S ribosomal RNA. The sequence is that of Small ribosomal subunit protein uS19 from Paracoccus denitrificans (strain Pd 1222).